A 356-amino-acid polypeptide reads, in one-letter code: Homoserine O-acetyltransferase (356 aa).

The AB hydrolase-1 domain maps to 50 to 335 (NVILVCHALT…DEPYGHDAFL (286 aa)). Serine 146 functions as the Nucleophile in the catalytic mechanism. Arginine 215 lines the substrate pocket. Catalysis depends on residues aspartate 302 and histidine 331. Residue aspartate 332 participates in substrate binding.

This sequence belongs to the AB hydrolase superfamily. MetX family. In terms of assembly, homodimer.

It localises to the cytoplasm. It catalyses the reaction L-homoserine + acetyl-CoA = O-acetyl-L-homoserine + CoA. The protein operates within amino-acid biosynthesis; L-methionine biosynthesis via de novo pathway; O-acetyl-L-homoserine from L-homoserine: step 1/1. In terms of biological role, transfers an acetyl group from acetyl-CoA to L-homoserine, forming acetyl-L-homoserine. In Chlorobaculum parvum (strain DSM 263 / NCIMB 8327) (Chlorobium vibrioforme subsp. thiosulfatophilum), this protein is Homoserine O-acetyltransferase.